A 91-amino-acid polypeptide reads, in one-letter code: Small ribosomal subunit protein bS18 (91 aa).

This sequence belongs to the bacterial ribosomal protein bS18 family. As to quaternary structure, part of the 30S ribosomal subunit. Forms a tight heterodimer with protein bS6.

Functionally, binds as a heterodimer with protein bS6 to the central domain of the 16S rRNA, where it helps stabilize the platform of the 30S subunit. This chain is Small ribosomal subunit protein bS18, found in Paraburkholderia phytofirmans (strain DSM 17436 / LMG 22146 / PsJN) (Burkholderia phytofirmans).